We begin with the raw amino-acid sequence, 281 residues long: Pantothenate synthetase (281 aa).

31–38 (MGNLHAGH) lines the ATP pocket. Histidine 38 functions as the Proton donor in the catalytic mechanism. Glutamine 62 is a (R)-pantoate binding site. Glutamine 62 contacts beta-alanine. An ATP-binding site is contributed by 150–153 (GKKD). Glutamine 156 lines the (R)-pantoate pocket. ATP contacts are provided by residues valine 179 and 187-190 (MSSR).

This sequence belongs to the pantothenate synthetase family. In terms of assembly, homodimer.

It is found in the cytoplasm. The catalysed reaction is (R)-pantoate + beta-alanine + ATP = (R)-pantothenate + AMP + diphosphate + H(+). The protein operates within cofactor biosynthesis; (R)-pantothenate biosynthesis; (R)-pantothenate from (R)-pantoate and beta-alanine: step 1/1. Functionally, catalyzes the condensation of pantoate with beta-alanine in an ATP-dependent reaction via a pantoyl-adenylate intermediate. This Xylella fastidiosa (strain 9a5c) protein is Pantothenate synthetase.